The sequence spans 482 residues: Serine decarboxylase 1 (482 aa).

The interval 36–55 (EVESPPRPAEEEGEGSPTRR) is disordered. His-200 serves as a coordination point for substrate. Lys-312 is subject to N6-(pyridoxal phosphate)lysine.

The protein belongs to the group II decarboxylase family. Pyridoxal 5'-phosphate is required as a cofactor.

The enzyme catalyses L-serine + H(+) = ethanolamine + CO2. Its function is as follows. Catalyzes the biosynthesis of ethanolamine from serine. Decarboxylation of free serine is the major source of ethanolamine production in plants and ethanolamine metabolism is crucial for the synthesis of choline, phosphatidylethanolamine (PE) and phosphatidylcholine (PC), and thus for plant growth. This Oryza sativa subsp. japonica (Rice) protein is Serine decarboxylase 1 (SDC1).